Consider the following 329-residue polypeptide: Galactosylgalactosylxylosylprotein 3-beta-glucuronosyltransferase 2 (329 aa).

Residues 1 to 2 (MK) lie on the Cytoplasmic side of the membrane. Residues 3-23 (SALFSRFFILLPWILIVIIML) traverse the membrane as a helical; Signal-anchor for type II membrane protein segment. The Lumenal portion of the chain corresponds to 24–329 (DVDTRRPAPP…YRLDTVKIEV (306 aa)). A disordered region spans residues 45–87 (VGRGGARLPPRRGGPDSGPGRGWEKRNESRPHARPRPEPPLPT). The segment covering 66 to 81 (GWEKRNESRPHARPRP) has biased composition (basic and acidic residues). Asparagine 71 carries an N-linked (GlcNAc...) asparagine glycan. Residues 93-95 (PTY), aspartate 124, arginine 161, arginine 166, and 191-193 (DDD) contribute to the UDP-alpha-D-glucuronate site. Residue aspartate 193 participates in Mn(2+) binding. The interaction with galactose moiety of substrate glycoprotein stretch occupies residues 240 to 249 (WRADRPFAID). Glutamate 279 (proton donor/acceptor) is an active-site residue. N-linked (GlcNAc...) asparagine glycosylation is present at asparagine 298. Residue 306–308 (HTR) participates in UDP-alpha-D-glucuronate binding.

It belongs to the glycosyltransferase 43 family. Homodimer. It depends on Mn(2+) as a cofactor.

Its subcellular location is the golgi apparatus membrane. It carries out the reaction 3-O-(beta-D-galactosyl-(1-&gt;3)-beta-D-galactosyl-(1-&gt;4)-beta-D-xylosyl)-L-seryl-[protein] + UDP-alpha-D-glucuronate = 3-O-(beta-D-GlcA-(1-&gt;3)-beta-D-Gal-(1-&gt;3)-beta-D-Gal-(1-&gt;4)-beta-D-Xyl)-L-seryl-[protein] + UDP + H(+). It functions in the pathway protein modification; protein glycosylation. In terms of biological role, involved in the biosynthesis of L2/HNK-1 carbohydrate epitope on both glycolipids and glycoproteins. The chain is Galactosylgalactosylxylosylprotein 3-beta-glucuronosyltransferase 2 (B3GAT2) from Canis lupus familiaris (Dog).